The following is a 220-amino-acid chain: Iron-sulfur cluster repair protein YtfE (220 aa).

It belongs to the RIC family. YtfE subfamily. Homodimer.

The protein localises to the cytoplasm. Di-iron-containing protein involved in the repair of iron-sulfur clusters damaged by oxidative and nitrosative stress conditions. The polypeptide is Iron-sulfur cluster repair protein YtfE (Escherichia coli O157:H7).